The following is a 358-amino-acid chain: ATPase ASNA1 homolog (358 aa).

35–42 (KGGVGKTT) provides a ligand contact to ATP. The active site involves Asp-64. Residues Glu-235 and Asn-262 each coordinate ATP.

It belongs to the arsA ATPase family. As to quaternary structure, homodimer.

It localises to the cytoplasm. The protein resides in the endoplasmic reticulum. In terms of biological role, ATPase required for the post-translational delivery of tail-anchored (TA) proteins to the endoplasmic reticulum. Recognizes and selectively binds the transmembrane domain of TA proteins in the cytosol. This complex then targets to the endoplasmic reticulum by membrane-bound receptors, where the tail-anchored protein is released for insertion. This process is regulated by ATP binding and hydrolysis. ATP binding drives the homodimer towards the closed dimer state, facilitating recognition of newly synthesized TA membrane proteins. ATP hydrolysis is required for insertion. Subsequently, the homodimer reverts towards the open dimer state, lowering its affinity for the membrane-bound receptor, and returning it to the cytosol to initiate a new round of targeting. This Babesia bovis protein is ATPase ASNA1 homolog.